The chain runs to 78 residues: UPF0248 protein Msed_0897 (78 aa).

This sequence belongs to the UPF0248 family.

The polypeptide is UPF0248 protein Msed_0897 (Metallosphaera sedula (strain ATCC 51363 / DSM 5348 / JCM 9185 / NBRC 15509 / TH2)).